Reading from the N-terminus, the 213-residue chain is Imidazole glycerol phosphate synthase subunit HisH 2 (213 aa).

One can recognise a Glutamine amidotransferase type-1 domain in the interval Arg-4 to Pro-211. Cys-82 functions as the Nucleophile in the catalytic mechanism. Residues His-186 and Glu-188 contribute to the active site.

In terms of assembly, heterodimer of HisH and HisF.

The protein localises to the cytoplasm. The catalysed reaction is 5-[(5-phospho-1-deoxy-D-ribulos-1-ylimino)methylamino]-1-(5-phospho-beta-D-ribosyl)imidazole-4-carboxamide + L-glutamine = D-erythro-1-(imidazol-4-yl)glycerol 3-phosphate + 5-amino-1-(5-phospho-beta-D-ribosyl)imidazole-4-carboxamide + L-glutamate + H(+). It catalyses the reaction L-glutamine + H2O = L-glutamate + NH4(+). It functions in the pathway amino-acid biosynthesis; L-histidine biosynthesis; L-histidine from 5-phospho-alpha-D-ribose 1-diphosphate: step 5/9. IGPS catalyzes the conversion of PRFAR and glutamine to IGP, AICAR and glutamate. The HisH subunit provides the glutamine amidotransferase activity that produces the ammonia necessary to HisF for the synthesis of IGP and AICAR. The polypeptide is Imidazole glycerol phosphate synthase subunit HisH 2 (hisH2) (Prochlorococcus marinus (strain MIT 9313)).